A 293-amino-acid polypeptide reads, in one-letter code: Nitrogenase iron protein (293 aa).

10 to 17 (GKGGIGKS) lines the ATP pocket. C98 is a binding site for [4Fe-4S] cluster. R101 is subject to ADP-ribosylarginine; by dinitrogenase reductase ADP-ribosyltransferase. C133 is a [4Fe-4S] cluster binding site.

This sequence belongs to the NifH/BchL/ChlL family. In terms of assembly, homodimer. The cofactor is [4Fe-4S] cluster. In terms of processing, the reversible ADP-ribosylation of Arg-101 inactivates the nitrogenase reductase and regulates nitrogenase activity.

It catalyses the reaction N2 + 8 reduced [2Fe-2S]-[ferredoxin] + 16 ATP + 16 H2O = H2 + 8 oxidized [2Fe-2S]-[ferredoxin] + 2 NH4(+) + 16 ADP + 16 phosphate + 6 H(+). In terms of biological role, the key enzymatic reactions in nitrogen fixation are catalyzed by the nitrogenase complex, which has 2 components: the iron protein and the molybdenum-iron protein. This Klebsiella pneumoniae (strain 342) protein is Nitrogenase iron protein.